Here is a 415-residue protein sequence, read N- to C-terminus: Beta-1,4-glucuronyltransferase 1 (415 aa).

The Cytoplasmic portion of the chain corresponds to 1–8 (MQMSYAIR). Residues 9–36 (CAFYQLLLAALMLVAMLQLLYLSLLSGL) form a helical; Signal-anchor for type II membrane protein membrane-spanning segment. Over 37-415 (HGQEEQDQYF…AKYPDSPRHC (379 aa)) the chain is Lumenal. N-linked (GlcNAc...) asparagine glycosylation occurs at Asn204. 2 residues coordinate Mn(2+): Asp227 and Asp229. Residue Asn300 is glycosylated (N-linked (GlcNAc...) asparagine).

It belongs to the glycosyltransferase 49 family. In terms of assembly, interacts with LARGE1 and LARGE2. Mn(2+) is required as a cofactor.

It is found in the golgi apparatus membrane. It carries out the reaction 3-O-[beta-D-Xyl-(1-&gt;4)-Rib-ol-P-Rib-ol-P-3-beta-D-GalNAc-(1-&gt;3)-beta-D-GlcNAc-(1-&gt;4)-(O-6-P-alpha-D-Man)]-Thr-[protein] + UDP-alpha-D-glucuronate = 3-O-[beta-D-GlcA-(1-&gt;3)-beta-D-Xyl-(1-&gt;4)-Rib-ol-P-Rib-ol-P-3-beta-D-GalNAc-(1-&gt;3)-beta-D-GlcNAc-(1-&gt;4)-(O-6-P-alpha-D-Man)]-Thr-[protein] + UDP + H(+). It functions in the pathway protein modification; protein glycosylation. In terms of biological role, beta-1,4-glucuronyltransferase involved in O-mannosylation of alpha-dystroglycan (DAG1). Transfers a glucuronic acid (GlcA) residue onto a xylose (Xyl) acceptor to produce the glucuronyl-beta-1,4-xylose-beta disaccharide primer, which is further elongated by LARGE1, during synthesis of phosphorylated O-mannosyl glycan. Phosphorylated O-mannosyl glycan is a carbohydrate structure present in alpha-dystroglycan (DAG1), which is required for binding laminin G-like domain-containing extracellular proteins with high affinity. Required for axon guidance; via its function in O-mannosylation of alpha-dystroglycan (DAG1). The sequence is that of Beta-1,4-glucuronyltransferase 1 from Bos taurus (Bovine).